The chain runs to 404 residues: Putative nitronate monooxygenase (404 aa).

41 to 43 contacts FMN; it reads PMA. His224 functions as the Proton acceptor in the catalytic mechanism. Residue His224 coordinates substrate. FMN contacts are provided by residues 270-272 and 293-294; these read AGG and GT.

This sequence belongs to the nitronate monooxygenase family. NMO class I subfamily. FMN is required as a cofactor.

The protein localises to the cytoplasm. It carries out the reaction ethylnitronate + O2 = chemical entity + acetaldehyde + nitrite + H(+). Its function is as follows. Catalyzes the oxidation of alkyl nitronates to produce the corresponding carbonyl compounds and nitrites. In Saccharomyces cerevisiae (strain ATCC 204508 / S288c) (Baker's yeast), this protein is Putative nitronate monooxygenase.